Reading from the N-terminus, the 616-residue chain is Dihydroxy-acid dehydratase (616 aa).

Aspartate 81 is a Mg(2+) binding site. Cysteine 122 is a [2Fe-2S] cluster binding site. Residues aspartate 123 and lysine 124 each contribute to the Mg(2+) site. Lysine 124 is modified (N6-carboxylysine). Position 195 (cysteine 195) interacts with [2Fe-2S] cluster. Glutamate 491 contributes to the Mg(2+) binding site. The active-site Proton acceptor is serine 517.

It belongs to the IlvD/Edd family. In terms of assembly, homodimer. [2Fe-2S] cluster serves as cofactor. Requires Mg(2+) as cofactor.

The catalysed reaction is (2R)-2,3-dihydroxy-3-methylbutanoate = 3-methyl-2-oxobutanoate + H2O. The enzyme catalyses (2R,3R)-2,3-dihydroxy-3-methylpentanoate = (S)-3-methyl-2-oxopentanoate + H2O. It functions in the pathway amino-acid biosynthesis; L-isoleucine biosynthesis; L-isoleucine from 2-oxobutanoate: step 3/4. Its pathway is amino-acid biosynthesis; L-valine biosynthesis; L-valine from pyruvate: step 3/4. Its function is as follows. Functions in the biosynthesis of branched-chain amino acids. Catalyzes the dehydration of (2R,3R)-2,3-dihydroxy-3-methylpentanoate (2,3-dihydroxy-3-methylvalerate) into 2-oxo-3-methylpentanoate (2-oxo-3-methylvalerate) and of (2R)-2,3-dihydroxy-3-methylbutanoate (2,3-dihydroxyisovalerate) into 2-oxo-3-methylbutanoate (2-oxoisovalerate), the penultimate precursor to L-isoleucine and L-valine, respectively. This is Dihydroxy-acid dehydratase from Salmonella gallinarum (strain 287/91 / NCTC 13346).